We begin with the raw amino-acid sequence, 119 residues long: Large ribosomal subunit protein bL19 (119 aa).

It belongs to the bacterial ribosomal protein bL19 family.

Functionally, this protein is located at the 30S-50S ribosomal subunit interface and may play a role in the structure and function of the aminoacyl-tRNA binding site. In Pediococcus pentosaceus (strain ATCC 25745 / CCUG 21536 / LMG 10740 / 183-1w), this protein is Large ribosomal subunit protein bL19.